The chain runs to 195 residues: uncharacterized protein (195 aa).

This is an uncharacterized protein from Magallana gigas (Pacific oyster).